The chain runs to 564 residues: Esterase FE4 (564 aa).

Positions 1 to 23 (MKNTCGILLNLFLFIGCFLTCSA) are cleaved as a signal peptide. An N-linked (GlcNAc...) asparagine glycan is attached at asparagine 81. The cysteines at positions 89 and 106 are disulfide-linked. Catalysis depends on serine 214, which acts as the Acyl-ester intermediate. A disulfide bridge connects residues cysteine 266 and cysteine 277. An N-linked (GlcNAc...) asparagine glycan is attached at asparagine 269. Glutamate 339 functions as the Charge relay system in the catalytic mechanism. N-linked (GlcNAc...) asparagine glycans are attached at residues asparagine 371, asparagine 404, and asparagine 443. Histidine 463 functions as the Charge relay system in the catalytic mechanism.

The protein belongs to the type-B carboxylesterase/lipase family.

It carries out the reaction a carboxylic ester + H2O = an alcohol + a carboxylate + H(+). Its function is as follows. Overproduction of nonspecific esterases is a common mechanism of resistance to organophosphate insecticides. The polypeptide is Esterase FE4 (Myzus persicae (Green peach aphid)).